The chain runs to 119 residues: Large ribosomal subunit protein uL24 (119 aa).

This sequence belongs to the universal ribosomal protein uL24 family. In terms of assembly, part of the 50S ribosomal subunit.

In terms of biological role, one of two assembly initiator proteins, it binds directly to the 5'-end of the 23S rRNA, where it nucleates assembly of the 50S subunit. Located at the polypeptide exit tunnel on the outside of the subunit. The sequence is that of Large ribosomal subunit protein uL24 from Methanococcus maripaludis (strain DSM 14266 / JCM 13030 / NBRC 101832 / S2 / LL).